Here is a 119-residue protein sequence, read N- to C-terminus: Protein TusC (119 aa).

It belongs to the DsrF/TusC family. Heterohexamer, formed by a dimer of trimers. The hexameric TusBCD complex contains 2 copies each of TusB, TusC and TusD. The TusBCD complex interacts with TusE.

It localises to the cytoplasm. Part of a sulfur-relay system required for 2-thiolation of 5-methylaminomethyl-2-thiouridine (mnm(5)s(2)U) at tRNA wobble positions. The polypeptide is Protein TusC (Klebsiella pneumoniae subsp. pneumoniae (strain ATCC 700721 / MGH 78578)).